We begin with the raw amino-acid sequence, 99 residues long: Acylphosphatase (99 aa).

In terms of domain architecture, Acylphosphatase-like spans 5 to 97 (VRQVTVQGRV…RPGERFSTLP (93 aa)). Active-site residues include arginine 20 and asparagine 38.

This sequence belongs to the acylphosphatase family.

The enzyme catalyses an acyl phosphate + H2O = a carboxylate + phosphate + H(+). In Rhodopseudomonas palustris (strain BisB18), this protein is Acylphosphatase (acyP).